A 580-amino-acid polypeptide reads, in one-letter code: Lysine--tRNA ligase (580 aa).

Residues 43–51 carry the 'HIGH' region motif; sequence PSGPIHLGN. The disordered stretch occupies residues 178 to 209; it reads KAPAKKSQKPLDEAELEAAEGSGAAAEDDGSS. Residues 196–209 are compositionally biased toward low complexity; it reads AEGSGAAAEDDGSS. The short motif at 325-329 is the 'KMSKS' region element; that stretch reads KMSSS.

It belongs to the class-I aminoacyl-tRNA synthetase family.

It localises to the cytoplasm. The enzyme catalyses tRNA(Lys) + L-lysine + ATP = L-lysyl-tRNA(Lys) + AMP + diphosphate. This chain is Lysine--tRNA ligase (lysS), found in Streptomyces coelicolor (strain ATCC BAA-471 / A3(2) / M145).